The sequence spans 365 residues: uncharacterized protein (365 aa).

Residues 18 to 46 (TAQEALTLIEKLDSDYKEKEEKITALSVH) are a coiled coil.

This is an uncharacterized protein from Bacillus subtilis (strain 168).